The chain runs to 167 residues: DNA-directed RNA polymerase II subunit rpb-9 (167 aa).

A disordered region spans residues 28-49 (DDMYDQNGASPAPSQNEKPGKS). Residues 34–44 (NGASPAPSQNE) show a composition bias toward polar residues. 8 residues coordinate Zn(2+): Cys59, Cys62, Cys81, Cys84, Cys128, Cys131, Cys156, and Cys161. The segment at 59–84 (CPECNNMLYPREDKESRVLMYSCRNC) adopts a C4-type zinc-finger fold. Residues 124–166 (EEHQCPVCGKSKAVFFQAQTKKAEEEMRLYYVCASQDCQHRWT) form a TFIIS-type zinc finger.

The protein belongs to the archaeal RpoM/eukaryotic RPA12/RPB9/RPC11 RNA polymerase family. Component of the RNA polymerase II (Pol II) complex consisting of 12 subunits. As to expression, expressed in the soma and in the germline.

It localises to the nucleus. The protein resides in the nucleolus. Its function is as follows. DNA-dependent RNA polymerase catalyzes the transcription of DNA into RNA using the four ribonucleoside triphosphates as substrates. Component of RNA polymerase II which synthesizes mRNA precursors and many functional non-coding RNAs. Pol II is the central component of the basal RNA polymerase II transcription machinery. It is composed of mobile elements that move relative to each other. RPB9 is part of the upper jaw surrounding the central large cleft and thought to grab the incoming DNA template. Recruits ints-6, a component of the Integrator complex to PIWI-interacting RNA (piRNA) genes, to mediate Integrator complex-dependent cleavage of 3' ends of nascent transcripts upon RNA Pol II backtracking to terminate transcription and generate piRNA precursors. Promotes the biogenesis of secondary 22G-siRNAs (a class of 22 nucleotide siRNAs that possess a triphosphorylated guanine residue at the 5'-end). Involved in gene silencing mediated by a class of 21 nucleotide piRNAs that possess a uracil residue at the 5'-end (also called 21U-RNAs) and guide the Piwi protein prg-1 to its DNA targets for silencing. Plays a role in small RNA-directed transgenerational epigenetic inheritance (also called RNAe) over several generations. Not required for the transgenerational inheritance of exogenous small interfering RNAs (RNAi). May play a role in the silencing of the DNA transposable elements from the DNA transposon families, Chapaev-2 and CEMUDR1. This Caenorhabditis elegans protein is DNA-directed RNA polymerase II subunit rpb-9.